The chain runs to 558 residues: Glucose-6-phosphate isomerase (558 aa).

Catalysis depends on Glu-362, which acts as the Proton donor. Catalysis depends on residues His-393 and Lys-523.

It belongs to the GPI family.

It is found in the cytoplasm. It catalyses the reaction alpha-D-glucose 6-phosphate = beta-D-fructose 6-phosphate. It functions in the pathway carbohydrate degradation; glycolysis; D-glyceraldehyde 3-phosphate and glycerone phosphate from D-glucose: step 2/4. The sequence is that of Glucose-6-phosphate isomerase (Pgi) from Drosophila melanogaster (Fruit fly).